Reading from the N-terminus, the 1076-residue chain is MSSAEIIGSTNLIILLEDEVFADFFNTFLSLPVFGQTPFYTVENSQWSLWPEIPCNLIAKYKGLLTWLEKCRLPFFCKTNLCFHYILCQEFISFIKSPEGGEELVDFWILAENILSIDEMDLEVRDYYLSLLLMLRATHLQEGSRVVTLCNMNIKSLLNLSIWHPNQSTTRREILSHMQKVALFKLQSYWLPNFYTHTKMTMAKEEACHGLMQEYETRLYSVCYTHIGGLPLNMSIKKCHHFQKRYSSRKAKRKMWQLVDPDSWSLEMDLKPDAIGMPLQETCPQEKVVIQMPSLKMASSKETRISSLEKDMHYAKISSMENKAKSHLHMEAPFETKVSTHLRTVIPIVNHSSKMTIQKAIKQSFSLGYIHLALCADACAGNPFRDHLKKLNLKVEIQLLDLWQDLQHFLSVLLNNKKNGNAIFRHLLGDRICELYLNEQIGPCLPLKSQTIQGLKELLPSGDVIPWIPKAQKEICKMLSPWYDEFLDEEDYWFLLFTTQNRFISSRQHKREFIGKEENILLYKRIQQSLELSQALADMKEMDYRQWRKIATEDLKQGGSLQVELTSPVFLTDITKMSFEELCYKNPKMAIQKISDDYKIYCEKAPKIDFKMEIIKETKTVSRSNRKMSLLKRTLVRKPSMRPRNLTEVLLNTQHLEFFREFLKERKAKIPLQFLTAVQKISIETNEKICKSLIENVIKTFFQGQLSPEEMLQCDAPIIKEIASMRHVTTSTLLTLQGHVMKSIEEKWFKDYQDLFPPHHQEVEVQSEVQISSRKPSKIVSTYLQESQKKGWMRMISFIRSFCKYRRFMLNPSKRQEFEDYLHQEMQNSKENFTTAHNTSGRSAPPSTNVRSADQENGEITLVKRRIFGHRIITVNFAINDLYFFSEMEKFNDLVSSAHMLQVNRAYNENDVILMRSKMNIIQKLFLNSDIPPKLRVNVPEFQKDAILAAITEGYLDRSVFHGAIMSVFPVVMYFWKRFCFWKATRSYLQYRGKKFKDRKSPPKSTDKYPFSSGGDNAILRFTLLRGIEWLQPQREAISSVQNSSSSKLTQPRLVVSAMQLHPVQGQKLSYIKKEK.

The RGS domain maps to 645 to 764; the sequence is NLTEVLLNTQ…LFPPHHQEVE (120 aa). The span at 834–852 shows a compositional bias: polar residues; it reads TTAHNTSGRSAPPSTNVRS. The tract at residues 834-854 is disordered; sequence TTAHNTSGRSAPPSTNVRSAD. Residues 960–982 traverse the membrane as a helical segment; sequence VFHGAIMSVFPVVMYFWKRFCFW.

The protein localises to the membrane. In Homo sapiens (Human), this protein is Regulator of G-protein signaling protein-like (RGSL1).